We begin with the raw amino-acid sequence, 149 residues long: Lipoprotein MlpF (149 aa).

Positions 1 to 17 are cleaved as a signal peptide; sequence MKIINILFCLFLLLLNS. Cys-18 carries the N-palmitoyl cysteine lipid modification. Cys-18 carries S-diacylglycerol cysteine lipidation. The tract at residues 26-58 is disordered; the sequence is LKNNAQQTKSRGKRDLTQKEATPEKPKSKEELL. Residues 38–58 are compositionally biased toward basic and acidic residues; it reads KRDLTQKEATPEKPKSKEELL.

The protein belongs to the Multicopy lipoprotein (Mlp) family.

It is found in the cell outer membrane. Functionally, an outer membrane protein that may participate in pathogenesis. Some human Lyme disease patients have antibodies against this protein. The Mlp proteins probably undergo intragenic recombination, generating new alleles. The chain is Lipoprotein MlpF from Borreliella burgdorferi (strain ATCC 35210 / DSM 4680 / CIP 102532 / B31) (Borrelia burgdorferi).